The primary structure comprises 264 residues: Thiazole synthase (264 aa).

Lys100 acts as the Schiff-base intermediate with DXP in catalysis. 1-deoxy-D-xylulose 5-phosphate is bound by residues Gly161, 187 to 188, and 209 to 210; these read AG and NT.

It belongs to the ThiG family. As to quaternary structure, homotetramer. Forms heterodimers with either ThiH or ThiS.

Its subcellular location is the cytoplasm. It carries out the reaction [ThiS sulfur-carrier protein]-C-terminal-Gly-aminoethanethioate + 2-iminoacetate + 1-deoxy-D-xylulose 5-phosphate = [ThiS sulfur-carrier protein]-C-terminal Gly-Gly + 2-[(2R,5Z)-2-carboxy-4-methylthiazol-5(2H)-ylidene]ethyl phosphate + 2 H2O + H(+). It participates in cofactor biosynthesis; thiamine diphosphate biosynthesis. Its function is as follows. Catalyzes the rearrangement of 1-deoxy-D-xylulose 5-phosphate (DXP) to produce the thiazole phosphate moiety of thiamine. Sulfur is provided by the thiocarboxylate moiety of the carrier protein ThiS. In vitro, sulfur can be provided by H(2)S. The protein is Thiazole synthase of Nitrosospira multiformis (strain ATCC 25196 / NCIMB 11849 / C 71).